We begin with the raw amino-acid sequence, 124 residues long: Small ribosomal subunit protein eS25 (124 aa).

Basic and acidic residues predominate over residues 1–22 (PPKDDKKKKDAGKSAKKDKDPV). Residues 1 to 37 (PPKDDKKKKDAGKSAKKDKDPVNKSGGKAKKKKWSKG) are disordered. Residues 27–37 (GKAKKKKWSKG) show a composition bias toward basic residues. Residue K42 is modified to N6-acetyllysine. K51 is subject to N6-acetyllysine; alternate. Position 51 is an N6-succinyllysine; alternate (K51). K59 and K65 each carry N6-acetyllysine. K93 is modified (N6-acetyllysine; alternate). Position 93 is an N6-succinyllysine; alternate (K93).

It belongs to the eukaryotic ribosomal protein eS25 family. Component of the small ribosomal subunit.

It localises to the cytoplasm. In terms of biological role, component of the small ribosomal subunit. The ribosome is a large ribonucleoprotein complex responsible for the synthesis of proteins in the cell. The polypeptide is Small ribosomal subunit protein eS25 (RPS25) (Oryctolagus cuniculus (Rabbit)).